Consider the following 519-residue polypeptide: Ion-translocating oxidoreductase complex subunit C (519 aa).

4Fe-4S ferredoxin-type domains follow at residues 372-401 (ETPE…FELN) and 411-440 (GAAK…VQSF). [4Fe-4S] cluster-binding residues include C381, C384, C387, C391, C420, C423, C426, and C430. The segment at 494-519 (KAEEAAAAAAMPPPATATAIQGEATP) is disordered.

This sequence belongs to the 4Fe4S bacterial-type ferredoxin family. RnfC subfamily. As to quaternary structure, the complex is composed of six subunits: RnfA, RnfB, RnfC, RnfD, RnfE and RnfG. [4Fe-4S] cluster is required as a cofactor.

Its subcellular location is the cellular chromatophore membrane. Part of a membrane-bound complex that couples electron transfer with translocation of ions across the membrane. Required for nitrogen fixation. Involved in electron transfer to nitrogenase. The chain is Ion-translocating oxidoreductase complex subunit C from Rhodobacter capsulatus (Rhodopseudomonas capsulata).